A 156-amino-acid chain; its full sequence is Small ribosomal subunit protein uS7 (156 aa).

Belongs to the universal ribosomal protein uS7 family. Part of the 30S ribosomal subunit. Contacts proteins S9 and S11.

In terms of biological role, one of the primary rRNA binding proteins, it binds directly to 16S rRNA where it nucleates assembly of the head domain of the 30S subunit. Is located at the subunit interface close to the decoding center, probably blocks exit of the E-site tRNA. This chain is Small ribosomal subunit protein uS7, found in Alkalilimnicola ehrlichii (strain ATCC BAA-1101 / DSM 17681 / MLHE-1).